A 265-amino-acid chain; its full sequence is Apolipoprotein A-I (265 aa).

Residues 1-16 (MKAAVLIWLFLMGSQA) form the signal peptide. 2 consecutive repeat copies span residues 66-87 (LKLL…EQLG) and 88-109 (PVTQ…QEMS). The tract at residues 66 to 265 (LKLLDNWDSL…EEYTKKLSSQ (200 aa)) is 10 X approximate tandem repeats. Position 108 is a methionine sulfoxide (Met108). Residues 110 to 120 (KDLEEVKAQVQ) form a 3; half-length repeat. 5 tandem repeats follow at residues 121–142 (PYLD…QKLE), 143–164 (PLRT…EKLS), 165–186 (PLAE…TQLA), 187–208 (PYSD…ENSG), and 209–230 (ASLA…EKAK). Position 134 is a methionine sulfoxide (Met134). One copy of the 9; half-length repeat lies at 231–241 (PALDDLRQGLL). Repeat 10 spans residues 242-265 (PVLESFKVSFLSALEEYTKKLSSQ).

This sequence belongs to the apolipoprotein A1/A4/E family. In terms of assembly, homodimer. Interacts with APOA1BP and CLU. Component of a sperm activating protein complex (SPAP), consisting of APOA1, an immunoglobulin heavy chain, an immunoglobulin light chain and albumin. Interacts with NDRG1. Interacts with SCGB3A2. Interacts with NAXE and YJEFN3. Glycosylated. Post-translationally, palmitoylated. In terms of processing, phosphorylation sites are present in the extracellular medium.

It is found in the secreted. Participates in the reverse transport of cholesterol from tissues to the liver for excretion by promoting cholesterol efflux from tissues and by acting as a cofactor for the lecithin cholesterol acyltransferase (LCAT). As part of the SPAP complex, activates spermatozoa motility. The chain is Apolipoprotein A-I (APOA1) from Aotus nancymaae (Ma's night monkey).